We begin with the raw amino-acid sequence, 236 residues long: Putative glutamine amidotransferase-like protein YvdE (236 aa).

The Glutamine amidotransferase type-1 domain maps to 17-236 (SPFWWNKVSY…IFEIFANGTI (220 aa)).

The sequence is that of Putative glutamine amidotransferase-like protein YvdE (yvdE) from Lactococcus lactis subsp. lactis (strain IL1403) (Streptococcus lactis).